Reading from the N-terminus, the 359-residue chain is Phospho-N-acetylmuramoyl-pentapeptide-transferase (359 aa).

The next 10 membrane-spanning stretches (helical) occupy residues 3 to 23 (QILI…PVLI), 55 to 75 (VAIL…GLAL), 84 to 104 (GLLV…DDLI), 120 to 140 (TVGI…FGNA), 156 to 176 (IATV…LVSA), 187 to 207 (LDGL…LITF), 231 to 251 (LALV…WNAA), 255 to 275 (IFMG…LSVT), 280 to 300 (ILAV…VVQI), and 334 to 354 (FWLL…GEWL).

Belongs to the glycosyltransferase 4 family. MraY subfamily. Mg(2+) serves as cofactor.

It is found in the cell membrane. It catalyses the reaction UDP-N-acetyl-alpha-D-muramoyl-L-alanyl-gamma-D-glutamyl-meso-2,6-diaminopimeloyl-D-alanyl-D-alanine + di-trans,octa-cis-undecaprenyl phosphate = di-trans,octa-cis-undecaprenyl diphospho-N-acetyl-alpha-D-muramoyl-L-alanyl-D-glutamyl-meso-2,6-diaminopimeloyl-D-alanyl-D-alanine + UMP. It functions in the pathway cell wall biogenesis; peptidoglycan biosynthesis. Its function is as follows. Catalyzes the initial step of the lipid cycle reactions in the biosynthesis of the cell wall peptidoglycan: transfers peptidoglycan precursor phospho-MurNAc-pentapeptide from UDP-MurNAc-pentapeptide onto the lipid carrier undecaprenyl phosphate, yielding undecaprenyl-pyrophosphoryl-MurNAc-pentapeptide, known as lipid I. This Mycobacterium sp. (strain MCS) protein is Phospho-N-acetylmuramoyl-pentapeptide-transferase.